Here is a 119-residue protein sequence, read N- to C-terminus: Putative membrane protein insertion efficiency factor (119 aa).

Positions 82-119 are disordered; sequence NALRGEKGGESAADVPSGGSVSEPPGPAAETSPNAQGA.

Belongs to the UPF0161 family.

It localises to the cell membrane. In terms of biological role, could be involved in insertion of integral membrane proteins into the membrane. This chain is Putative membrane protein insertion efficiency factor, found in Streptomyces griseus subsp. griseus (strain JCM 4626 / CBS 651.72 / NBRC 13350 / KCC S-0626 / ISP 5235).